A 187-amino-acid polypeptide reads, in one-letter code: Peroxisome assembly protein 22 (187 aa).

Residues 7 to 29 form a helical membrane-spanning segment; that stretch reads NTFFGLAALGALGLGYSVYKSFI.

Belongs to the peroxin-22 family. As to quaternary structure, interacts with PEX4.

Its subcellular location is the peroxisome membrane. Its function is as follows. Involved in peroxisome biogenesis. This chain is Peroxisome assembly protein 22 (PEX22), found in Komagataella pastoris (Yeast).